A 384-amino-acid polypeptide reads, in one-letter code: Cell division protein FtsZ (384 aa).

Residues 20–24 (GGGGN), 107–109 (GTG), Glu-138, Arg-142, and Asn-186 each bind GTP.

Belongs to the FtsZ family. Homodimer. Polymerizes to form a dynamic ring structure in a strictly GTP-dependent manner. Interacts directly with several other division proteins.

The protein localises to the cytoplasm. Functionally, essential cell division protein that forms a contractile ring structure (Z ring) at the future cell division site. The regulation of the ring assembly controls the timing and the location of cell division. One of the functions of the FtsZ ring is to recruit other cell division proteins to the septum to produce a new cell wall between the dividing cells. Binds GTP and shows GTPase activity. The protein is Cell division protein FtsZ of Buchnera aphidicola subsp. Schizaphis graminum (strain Sg).